The following is a 223-amino-acid chain: Protein-L-isoaspartate O-methyltransferase (223 aa).

The active site involves S70.

Belongs to the methyltransferase superfamily. L-isoaspartyl/D-aspartyl protein methyltransferase family.

The protein resides in the cytoplasm. The enzyme catalyses [protein]-L-isoaspartate + S-adenosyl-L-methionine = [protein]-L-isoaspartate alpha-methyl ester + S-adenosyl-L-homocysteine. Catalyzes the methyl esterification of L-isoaspartyl residues in peptides and proteins that result from spontaneous decomposition of normal L-aspartyl and L-asparaginyl residues. It plays a role in the repair and/or degradation of damaged proteins. This chain is Protein-L-isoaspartate O-methyltransferase, found in Saccharophagus degradans (strain 2-40 / ATCC 43961 / DSM 17024).